The following is a 426-amino-acid chain: Gamma-glutamyl phosphate reductase (426 aa).

This sequence belongs to the gamma-glutamyl phosphate reductase family.

The protein localises to the cytoplasm. It carries out the reaction L-glutamate 5-semialdehyde + phosphate + NADP(+) = L-glutamyl 5-phosphate + NADPH + H(+). It participates in amino-acid biosynthesis; L-proline biosynthesis; L-glutamate 5-semialdehyde from L-glutamate: step 2/2. Catalyzes the NADPH-dependent reduction of L-glutamate 5-phosphate into L-glutamate 5-semialdehyde and phosphate. The product spontaneously undergoes cyclization to form 1-pyrroline-5-carboxylate. The polypeptide is Gamma-glutamyl phosphate reductase (Ralstonia nicotianae (strain ATCC BAA-1114 / GMI1000) (Ralstonia solanacearum)).